Consider the following 221-residue polypeptide: MALPNQQTVDYPSFKLVIVGDGGTGKTTFVKRHLTGEFEKKYEPTIGVEVHPLDFFTNCGKIRFYCWDTAGQEKFGGLRDGYYIHGQCAIIMFDVTSRLTYKNVPTWHRDLCRVCENIPIVLCGNKVDVKNRQVKAKQVTFHRKKNLQYYEVSAKSNYNFEKPFLYLARKLAGDGNLHFVETPALAPPDVTIDLAAQQQHEAELAAAAAQPLPDDDDDLIE.

A Small GTPase Ran-type domain is found at 10-174 (DYPSFKLVIV…LYLARKLAGD (165 aa)). A GTP-binding site is contributed by 21 to 28 (DGGTGKTT). The tract at residues 40-48 (KKYEPTIGV) is switch-I. GTP is bound by residues G71, 125-128 (NKVD), and 153-155 (SAK). Residues 71 to 87 (GQEKFGGLRDGYYIHGQ) form a switch-II region.

The protein belongs to the small GTPase superfamily. Ran family. In terms of assembly, found in a nuclear export complex with RanGTP, exportin and pre-miRNA.

The protein resides in the nucleus. Functionally, GTP-binding protein involved in nucleocytoplasmic transport. Required for the import of protein into the nucleus and also for RNA export. Involved in chromatin condensation and control of cell cycle. This is GTP-binding nuclear protein Ran-1 (RAN1) from Oryza sativa subsp. indica (Rice).